The primary structure comprises 718 residues: Nucleolar protein 11 (718 aa).

Lysine 346 is modified (N6-methyllysine).

In terms of assembly, interacts with UTP4. Interacts with FBL/fibrillarin in a transcription-dependent manner. May associate with the proposed t-UTP subcomplex of the SSU processome containing at least UTP4, WDR43, HEATR1, UTP15, WDR75.

It localises to the nucleus. The protein resides in the nucleolus. Functionally, ribosome biogenesis factor. May be required for both optimal rDNA transcription and small subunit (SSU) pre-rRNA processing at sites A', A0, 1 and 2b. The protein is Nucleolar protein 11 (NOL11) of Pongo abelii (Sumatran orangutan).